Here is a 415-residue protein sequence, read N- to C-terminus: MTEQSAHEKYEFKKKLEGLRDKKGRSTELISLYIPPDKQIFDVTNQLKDEHGQAANIKSKLTRTNVQGAIESLLSRLRYLDKVPENGIVYFTGAVDIGANKTSMESEVIVPPDPITVYKYHCDSSFYLEPLEDMLKDKNTYGLLVLDRREATIGLLVGKRIQPFRNLTSTVPGKQRKGGQSAHRFQQLRLIAIHDFYKRIGDAASEVFMAVDHKDLKGVLIGGPSPTKEEFHAGEFLHHELMKKILGLFDTAYTDESGLSELVNAAGEKLQDLELMGQKNAVRDFFKELIADSGKVAYGESQVRANLEINSVDVLLLSEDLRAERVTTKCSVCGYENKWTRRWKPGEPAPAAGNCPKCGSSLEVTDVTDIVDEFSELADKSNAKVVFVSTDFDEGSQLMNAFGGIAAILRYNTGV.

It belongs to the eukaryotic release factor 1 family. As to quaternary structure, heterodimer of two subunits, one of which binds GTP.

The protein localises to the cytoplasm. In terms of biological role, directs the termination of nascent peptide synthesis (translation) in response to the termination codons UAA, UAG and UGA. The protein is Peptide chain release factor subunit 1 of Methanosarcina mazei (strain ATCC BAA-159 / DSM 3647 / Goe1 / Go1 / JCM 11833 / OCM 88) (Methanosarcina frisia).